Reading from the N-terminus, the 224-residue chain is Uridylate kinase (224 aa).

Lys-6 to Lys-10 lines the ATP pocket. Gly-41 lines the UMP pocket. ATP-binding residues include Gly-42 and Arg-46. Residues Asp-63 and Phe-111–Thr-117 each bind UMP. ATP contacts are provided by Thr-137, Phe-143, and Asp-146.

This sequence belongs to the UMP kinase family. As to quaternary structure, homohexamer.

Its subcellular location is the cytoplasm. It catalyses the reaction UMP + ATP = UDP + ADP. It participates in pyrimidine metabolism; CTP biosynthesis via de novo pathway; UDP from UMP (UMPK route): step 1/1. Its activity is regulated as follows. Inhibited by UTP. Its function is as follows. Catalyzes the reversible phosphorylation of UMP to UDP. The protein is Uridylate kinase of Metallosphaera sedula (strain ATCC 51363 / DSM 5348 / JCM 9185 / NBRC 15509 / TH2).